The primary structure comprises 190 residues: Ion-translocating oxidoreductase complex subunit B (190 aa).

Residues 1–26 are hydrophobic; it reads MLTFWLAVATLSALALVAGAVLGFAA. In terms of domain architecture, 4Fe-4S spans 32–90; the sequence is KTDPVAERIDALLPQSQCAQCGYPGCRPYAEAVAGGAPINKCVPGGEAVMLKIAAQLSV. The [4Fe-4S] cluster site is built by C49, C52, C57, C73, C115, C118, C121, C125, C145, C148, C151, and C155. 2 4Fe-4S ferredoxin-type domains span residues 106-135 and 136-165; these read RVAW…GATR and AVHT…MRPL.

The protein belongs to the 4Fe4S bacterial-type ferredoxin family. RnfB subfamily. As to quaternary structure, the complex is composed of six subunits: RnfA, RnfB, RnfC, RnfD, RnfE and RnfG. [4Fe-4S] cluster is required as a cofactor.

The protein resides in the cell inner membrane. Its function is as follows. Part of a membrane-bound complex that couples electron transfer with translocation of ions across the membrane. This Sodalis glossinidius (strain morsitans) protein is Ion-translocating oxidoreductase complex subunit B.